The primary structure comprises 555 residues: L-ascorbate oxidase homolog (555 aa).

An N-terminal signal peptide occupies residues 1-23; that stretch reads MRGVKLLAACLYLAAAATVVVHA. Plastocyanin-like domains follow at residues 25-145 and 158-301; these read DPYF…LRVN and EDDY…RYEG. N33, N61, and N110 each carry an N-linked (GlcNAc...) asparagine glycan. Residues C103 and C539 are joined by a disulfide bond. N330, N350, and N422 each carry an N-linked (GlcNAc...) asparagine glycan. A Plastocyanin-like 3 domain is found at 345–524; sequence HYGKINITRT…LYASVLSPEK (180 aa).

It belongs to the multicopper oxidase family. As to expression, maximal expression in early binucleate microspores; declines considerably in mature trinucleate pollen.

Its subcellular location is the secreted. Probable oxidase that may be involved in pollen tube growth. This chain is L-ascorbate oxidase homolog (Bp10), found in Brassica napus (Rape).